The chain runs to 287 residues: VNGAAYAGLCAYMFLLILVGFPVNFLTLYVTLEHKKLRTPLNYILLNLAVADLFMVLGGFTTTMYTSAHGYFVLGRLGCNVEGFFATLGGEIALWSLVVLAVERWIVVCKPISNFRFTEEHAIMGLGFNWVMASACAVPPLVGWSRYIPEGMQCSCGINYYTRSEGFNNESLVMKMLICHFLIPLFVIFFCYGRMLCAVKEAAAAQQESETTQRAEREVSRMVVIMVISFLVCWLPYASVAWYIFCNQGSEFGPVFMTLPAFFAKSASIYNPLIYICMNKHSRHCMI.

Topologically, residues 1-5 are extracellular; it reads VNGAA. Residues 6 to 30 form a helical membrane-spanning segment; sequence YAGLCAYMFLLILVGFPVNFLTLYV. Over 31 to 42 the chain is Cytoplasmic; the sequence is TLEHKKLRTPLN. A helical transmembrane segment spans residues 43–65; the sequence is YILLNLAVADLFMVLGGFTTTMY. Over 66–79 the chain is Extracellular; the sequence is TSAHGYFVLGRLGC. Cys79 and Cys156 are oxidised to a cystine. Residues 80–102 form a helical membrane-spanning segment; sequence NVEGFFATLGGEIALWSLVVLAV. The 'Ionic lock' involved in activated form stabilization signature appears at 103–105; that stretch reads ERW. Over 103-121 the chain is Cytoplasmic; the sequence is ERWIVVCKPISNFRFTEEH. A helical transmembrane segment spans residues 122–142; it reads AIMGLGFNWVMASACAVPPLV. The Extracellular segment spans residues 143–171; sequence GWSRYIPEGMQCSCGINYYTRSEGFNNES. The N-linked (GlcNAc...) asparagine glycan is linked to Asn169. Residues 172–193 form a helical membrane-spanning segment; that stretch reads LVMKMLICHFLIPLFVIFFCYG. Topologically, residues 194–221 are cytoplasmic; sequence RMLCAVKEAAAAQQESETTQRAEREVSR. Residues 222 to 243 form a helical membrane-spanning segment; the sequence is MVVIMVISFLVCWLPYASVAWY. The Extracellular portion of the chain corresponds to 244–255; sequence IFCNQGSEFGPV. Residues 256–277 form a helical membrane-spanning segment; sequence FMTLPAFFAKSASIYNPLIYIC. Lys265 carries the N6-(retinylidene)lysine modification. Topologically, residues 278–287 are cytoplasmic; it reads MNKHSRHCMI.

The protein belongs to the G-protein coupled receptor 1 family. Opsin subfamily. Post-translationally, phosphorylated on some or all of the serine and threonine residues present in the C-terminal region. In terms of processing, contains one covalently linked retinal chromophore.

The protein localises to the membrane. The protein resides in the cell projection. It is found in the cilium. Its subcellular location is the photoreceptor outer segment. Its function is as follows. Photoreceptor required for image-forming vision at low light intensity. While most salt water fish species use retinal as chromophore, most freshwater fish use 3-dehydroretinal, or a mixture of retinal and 3-dehydroretinal. Light-induced isomerization of 11-cis to all-trans retinal triggers a conformational change that activates signaling via G-proteins. Subsequent receptor phosphorylation mediates displacement of the bound G-protein alpha subunit by arrestin and terminates signaling. The chain is Rhodopsin (rho) from Taurulus bubalis (Long-spined sea scorpion).